The primary structure comprises 85 residues: Large ribosomal subunit protein bL27 (85 aa).

Residues 1–22 (MAHKKGQGSSRNGRDSPGQRRG) are disordered.

It belongs to the bacterial ribosomal protein bL27 family.

The sequence is that of Large ribosomal subunit protein bL27 from Anaeromyxobacter dehalogenans (strain 2CP-1 / ATCC BAA-258).